Reading from the N-terminus, the 741-residue chain is Methionine--tRNA ligase (741 aa).

Polar residues predominate over residues 1–22 (MTMKQYTMSKMNAETQTQTRES). The segment at 1-25 (MTMKQYTMSKMNAETQTQTRESFPT) is disordered. Residues 36–46 (PYANGDLHIGH) carry the 'HIGH' region motif. Zn(2+) contacts are provided by C167, C170, C179, and C183. A disordered region spans residues 309–329 (VRSHSSSSAKDSSEGNSPSNI). Over residues 311–329 (SHSSSSAKDSSEGNSPSNI) the composition is skewed to low complexity. T381 serves as a coordination point for ATP. The segment at 591 to 629 (KLADRVTDPTDDDDSDTDTETGTDVAETTNESHSESNMT) is disordered. Residues 599-611 (PTDDDDSDTDTET) are compositionally biased toward acidic residues. A compositionally biased stretch (polar residues) spans 616–629 (AETTNESHSESNMT). Residues 643–741 (EFEELDLRVA…EDADPGTSIQ (99 aa)) form the tRNA-binding domain.

It belongs to the class-I aminoacyl-tRNA synthetase family. MetG type 1 subfamily. Homodimer. Zn(2+) serves as cofactor.

The protein resides in the cytoplasm. The catalysed reaction is tRNA(Met) + L-methionine + ATP = L-methionyl-tRNA(Met) + AMP + diphosphate. In terms of biological role, is required not only for elongation of protein synthesis but also for the initiation of all mRNA translation through initiator tRNA(fMet) aminoacylation. The protein is Methionine--tRNA ligase of Haloquadratum walsbyi (strain DSM 16790 / HBSQ001).